Reading from the N-terminus, the 562-residue chain is Apyrase (562 aa).

A signal peptide spans 1-24; sequence MAGRPGYSEVIFLYVVSVAVIARA. Positions 47, 49, and 98 each coordinate a divalent metal cation. Asparagine 112 carries an N-linked (GlcNAc...) asparagine glycan. A divalent metal cation contacts are provided by asparagine 130, histidine 233, and histidine 257. Arginine 370 is a binding site for AMP. Residue asparagine 390 is glycosylated (N-linked (GlcNAc...) asparagine). Arginine 405, phenylalanine 424, and aspartate 514 together coordinate AMP.

It belongs to the 5'-nucleotidase family. As to quaternary structure, (Microbial infection) Interacts with Zika virus envelope protein E and Zika virus-like particles; the interaction does not affect Zika virus replication in human endothelial cells and keratinocytes. Requires a divalent metal cation as cofactor. Post-translationally, the N-terminus is blocked. As to expression, female saliva (at protein level). Female salivary gland (at protein level). Not detected or low-level expression in female carcasses without salivary glands. Not detected in male tissues.

Its subcellular location is the secreted. The catalysed reaction is a ribonucleoside 5'-triphosphate + 2 H2O = a ribonucleoside 5'-phosphate + 2 phosphate + 2 H(+). Functionally, facilitates hematophagy by preventing ADP-, collagen- and thrombin-dependent platelet aggregation in the host. Cleaves adenosine triphosphate (ATP) and adenosine diphosphate (ADP) to adenosine monophosphate (AMP) and inorganic phosphate. May reduce probing time by facilitating the speed of locating blood. In terms of biological role, (Microbial infection) Does not affect Zika virus replication in human endothelial cells and keratinocytes. The protein is Apyrase of Aedes aegypti (Yellowfever mosquito).